The primary structure comprises 404 residues: uncharacterized protein (404 aa).

Helical transmembrane passes span 1-21 (MNVLWGLLGAVAIIAIAFLFS), 32-52 (VIVGLCTQVAFGYIVLKWEAG), 89-109 (AFALSVLPVIIFFSALIAVLY), 182-202 (LFGYALLGIPIEYLLAASFMA), 261-281 (LAFVALIAVVNGILGGAFGLF), 285-305 (GVTLESILGYVFSPIAFLIGV), 344-364 (ATIISFALCGFANFSSIAIML), and 384-404 (KAVLAGTLANLLSAAIAGMFI).

This sequence belongs to the concentrative nucleoside transporter (CNT) (TC 2.A.41) family.

It is found in the cell membrane. This is an uncharacterized protein from Bacillus subtilis (strain 168).